Consider the following 468-residue polypeptide: ATP synthase subunit beta (468 aa).

Position 155-162 (155-162) interacts with ATP; the sequence is GGAGVGKT.

The protein belongs to the ATPase alpha/beta chains family. As to quaternary structure, F-type ATPases have 2 components, CF(1) - the catalytic core - and CF(0) - the membrane proton channel. CF(1) has five subunits: alpha(3), beta(3), gamma(1), delta(1), epsilon(1). CF(0) has three main subunits: a(1), b(2) and c(9-12). The alpha and beta chains form an alternating ring which encloses part of the gamma chain. CF(1) is attached to CF(0) by a central stalk formed by the gamma and epsilon chains, while a peripheral stalk is formed by the delta and b chains.

The protein localises to the cell inner membrane. It catalyses the reaction ATP + H2O + 4 H(+)(in) = ADP + phosphate + 5 H(+)(out). Functionally, produces ATP from ADP in the presence of a proton gradient across the membrane. The catalytic sites are hosted primarily by the beta subunits. The sequence is that of ATP synthase subunit beta from Bdellovibrio bacteriovorus (strain ATCC 15356 / DSM 50701 / NCIMB 9529 / HD100).